Consider the following 135-residue polypeptide: ATP synthase epsilon chain (135 aa).

The protein belongs to the ATPase epsilon chain family. In terms of assembly, F-type ATPases have 2 components, CF(1) - the catalytic core - and CF(0) - the membrane proton channel. CF(1) has five subunits: alpha(3), beta(3), gamma(1), delta(1), epsilon(1). CF(0) has three main subunits: a, b and c.

The protein resides in the cell inner membrane. Its function is as follows. Produces ATP from ADP in the presence of a proton gradient across the membrane. In Brucella suis (strain ATCC 23445 / NCTC 10510), this protein is ATP synthase epsilon chain.